Here is a 653-residue protein sequence, read N- to C-terminus: Potassium voltage-gated channel subfamily A member 4 (653 aa).

The Cytoplasmic portion of the chain corresponds to 1-304 (MEVAMVSAES…LLFEYPESSS (304 aa)). The disordered stretch occupies residues 24–148 (QARARERERL…RFYYSEDDHG (125 aa)). The segment covering 36–52 (SRAAAAAAVAAATAAVE) has biased composition (low complexity). Residues 81-97 (GSRRRRRQRSEKKKAHY) show a composition bias toward basic residues. Ser-90 is modified (phosphoserine; by PKA). Residue Ser-122 is modified to Phosphoserine. Over residues 122–137 (SEEEEDEEEEEEEEEE) the composition is skewed to acidic residues. The helical transmembrane segment at 305-326 (PARGIAIVSVLVILISIVIFCL) threads the bilayer. The Extracellular segment spans residues 327–370 (ETLPEFRDDRDLVMALSAGGHGGLLNDTSAPHLENSGHTIFNDP). Asn-352 carries N-linked (GlcNAc...) asparagine glycosylation. Residues 371–392 (FFIVETVCIVWFSFEFVVRCFA) form a helical membrane-spanning segment. Residues 393–403 (CPSQALFFKNI) lie on the Cytoplasmic side of the membrane. The chain crosses the membrane as a helical span at residues 404–424 (MNIIDIVSILPYFITLGTDLA). The Extracellular portion of the chain corresponds to 425-439 (QQQGGGNGQQQQAMS). The helical; Voltage-sensor transmembrane segment at 440-460 (FAILRIIRLVRVFRIFKLSRH) threads the bilayer. The Cytoplasmic segment spans residues 461–475 (SKGLQILGHTLRASM). The interval 462–475 (KGLQILGHTLRASM) is S4-S5 linker. The chain crosses the membrane as a helical span at residues 476-497 (RELGLLIFFLFIGVILFSSAVY). Topologically, residues 498–511 (FAEADEPTTHFQSI) are extracellular. The segment at residues 512–523 (PDAFWWAVVTMT) is an intramembrane region (helical). Residues 524–529 (TVGYGD) carry the Selectivity filter motif. Residues 524–531 (TVGYGDMK) lie within the membrane without spanning it. The Extracellular portion of the chain corresponds to 532–538 (PITVGGK). A helical membrane pass occupies residues 539-567 (IVGSLCAIAGVLTIALPVPVIVSNFNYFY). The Cytoplasmic segment spans residues 568–653 (HRETENEEQT…SNAKAVETDV (86 aa)). Ser-599 is subject to Phosphoserine; by PKA. The segment covering 629-640 (CQGKGDDSETDK) has biased composition (basic and acidic residues). The interval 629–653 (CQGKGDDSETDKNNCSNAKAVETDV) is disordered. Positions 651 to 653 (TDV) match the PDZ-binding motif.

This sequence belongs to the potassium channel family. A (Shaker) (TC 1.A.1.2) subfamily. Kv1.4/KCNA4 sub-subfamily. As to quaternary structure, homotetramer and heterotetramer of potassium channel proteins. Interacts with KCNAB1 and KCNAB2. Interacts with DLG1, DLG2 and DLG4 via their PDZ domains. Interacts with SIGMAR1. Detected in a complex with KCNA1. Interacts with KCNA2. Part of a complex containing KCNA1, KCNAB1 and LGI1. Interacts (via cytoplasmic N-terminal domain) with KCNRG. In terms of tissue distribution, expressed in brain, and at lower levels in the testis, lung, kidney, colon and heart. Detected in heart ventricle.

The protein resides in the cell membrane. The protein localises to the cell projection. It is found in the axon. It catalyses the reaction K(+)(in) = K(+)(out). With respect to regulation, inhibited by 4-aminopyridine (4-AP), but not by tetraethylammonium (TEA) and charybdotoxin (CTX). Its function is as follows. Voltage-gated potassium channel that mediates transmembrane potassium transport in excitable membranes. Forms tetrameric potassium-selective channels through which potassium ions pass in accordance with their electrochemical gradient. The channel alternates between opened and closed conformations in response to the voltage difference across the membrane. Can form functional homotetrameric channels and heterotetrameric channels that contain variable proportions of KCNA1, KCNA2, KCNA4, KCNA5, and possibly other family members as well; channel properties depend on the type of alpha subunits that are part of the channel. Channel properties are modulated by cytoplasmic beta subunits that regulate the subcellular location of the alpha subunits and promote rapid inactivation. In vivo, membranes probably contain a mixture of heteromeric potassium channel complexes, making it difficult to assign currents observed in intact tissues to any particular potassium channel family member. Homotetrameric KCNA4 forms a potassium channel that opens in response to membrane depolarization, followed by rapid spontaneous channel closure. Likewise, a heterotetrameric channel formed by KCNA1 and KCNA4 shows rapid inactivation. The protein is Potassium voltage-gated channel subfamily A member 4 (KCNA4) of Homo sapiens (Human).